A 309-amino-acid chain; its full sequence is MNHLLSTADLKLDDALLVLDTADRMARVADAPVRKLPTLRGRTVVNLFFEDSTRTRTSFEVAAKRLSADVINFSARGSSVSKGESLKDTAQTLEAMGADAVVCRHPASGAPHRLASWVRGSVVNAGDGTHEHPTQALLDAFTIRRRLGRLDGLAVTIVGDVLHSRVARSNVWLLTTLGARVTVVAPPTLLPLGISGWPVEVSYDLESVLPKSDVVMMLRVQRERMSAAFFPTEREYSRRYGLDADRAALMPEHALVMHPGPMVRGMEIASSVADSPRSTVVEQVANGVSVRMAVLYLLLGGSGAERESS.

Positions 54 and 55 each coordinate carbamoyl phosphate. K82 serves as a coordination point for L-aspartate. R104, H132, and Q135 together coordinate carbamoyl phosphate. L-aspartate contacts are provided by R165 and R219. Carbamoyl phosphate contacts are provided by G260 and P261.

It belongs to the aspartate/ornithine carbamoyltransferase superfamily. ATCase family. In terms of assembly, heterododecamer (2C3:3R2) of six catalytic PyrB chains organized as two trimers (C3), and six regulatory PyrI chains organized as three dimers (R2).

It catalyses the reaction carbamoyl phosphate + L-aspartate = N-carbamoyl-L-aspartate + phosphate + H(+). It participates in pyrimidine metabolism; UMP biosynthesis via de novo pathway; (S)-dihydroorotate from bicarbonate: step 2/3. Functionally, catalyzes the condensation of carbamoyl phosphate and aspartate to form carbamoyl aspartate and inorganic phosphate, the committed step in the de novo pyrimidine nucleotide biosynthesis pathway. This chain is Aspartate carbamoyltransferase catalytic subunit, found in Parafrankia sp. (strain EAN1pec).